The chain runs to 99 residues: UPF0213 protein PC1_0597 (99 aa).

Residues 8-83 (PQWYLYILRT…KQLSKNQKER (76 aa)) enclose the GIY-YIG domain.

The protein belongs to the UPF0213 family.

This is UPF0213 protein PC1_0597 from Pectobacterium carotovorum subsp. carotovorum (strain PC1).